A 313-amino-acid polypeptide reads, in one-letter code: Porphobilinogen deaminase (313 aa).

Cysteine 242 carries the post-translational modification S-(dipyrrolylmethanemethyl)cysteine.

The protein belongs to the HMBS family. In terms of assembly, monomer. Dipyrromethane is required as a cofactor.

The enzyme catalyses 4 porphobilinogen + H2O = hydroxymethylbilane + 4 NH4(+). It participates in porphyrin-containing compound metabolism; protoporphyrin-IX biosynthesis; coproporphyrinogen-III from 5-aminolevulinate: step 2/4. Functionally, tetrapolymerization of the monopyrrole PBG into the hydroxymethylbilane pre-uroporphyrinogen in several discrete steps. The protein is Porphobilinogen deaminase of Klebsiella pneumoniae (strain 342).